The primary structure comprises 248 residues: MNIEKHLISLINDLCQISGVEVGQHFYWQLGGFQVHAQVLITSWVVIVLLSGLAFVTTRDLRTIPTGGQNFVEYVLEFIRDLTRTQIGEEEYRPWVPFIGTLFLFIFVSNWSGALFPWKIIQLPHGELAAPTNDINTTVALALLTSVAYFYAGLHKKGLSYFGRYIKPTPILLPINILEDFTKPLSLSFRLFGNILADELVVAVLISLVPLVVPIPMMFLGLFTSAIQALIFATLAAAYIGESMEGHH.

The next 5 helical transmembrane spans lie at Ala37–Thr57, Val96–Phe116, Ile135–His155, Leu200–Leu220, and Gly221–Gly241.

It belongs to the ATPase A chain family. As to quaternary structure, F-type ATPases have 2 components, CF(1) - the catalytic core - and CF(0) - the membrane proton channel. CF(1) has five subunits: alpha(3), beta(3), gamma(1), delta(1), epsilon(1). CF(0) has four main subunits: a, b, b' and c.

Its subcellular location is the plastid. It is found in the chloroplast thylakoid membrane. Key component of the proton channel; it plays a direct role in the translocation of protons across the membrane. The polypeptide is ATP synthase subunit a, chloroplastic (Psilotum nudum (Whisk fern)).